Here is a 350-residue protein sequence, read N- to C-terminus: 4-hydroxythreonine-4-phosphate dehydrogenase (350 aa).

Substrate-binding residues include histidine 138 and threonine 139. Positions 173, 218, and 273 each coordinate a divalent metal cation. The substrate site is built by lysine 281, asparagine 290, and arginine 299.

The protein belongs to the PdxA family. In terms of assembly, homodimer. Requires Zn(2+) as cofactor. Mg(2+) is required as a cofactor. The cofactor is Co(2+).

It localises to the cytoplasm. The catalysed reaction is 4-(phosphooxy)-L-threonine + NAD(+) = 3-amino-2-oxopropyl phosphate + CO2 + NADH. Its pathway is cofactor biosynthesis; pyridoxine 5'-phosphate biosynthesis; pyridoxine 5'-phosphate from D-erythrose 4-phosphate: step 4/5. Functionally, catalyzes the NAD(P)-dependent oxidation of 4-(phosphooxy)-L-threonine (HTP) into 2-amino-3-oxo-4-(phosphooxy)butyric acid which spontaneously decarboxylates to form 3-amino-2-oxopropyl phosphate (AHAP). The protein is 4-hydroxythreonine-4-phosphate dehydrogenase of Xanthobacter autotrophicus (strain ATCC BAA-1158 / Py2).